The chain runs to 395 residues: Elongation factor Tu (395 aa).

The 196-residue stretch at 10-205 (KPHVNVGTIG…VDNDIPIPPR (196 aa)) folds into the tr-type G domain. The segment at 19-26 (GHVDHGKT) is G1. GTP is bound at residue 19–26 (GHVDHGKT). T26 provides a ligand contact to Mg(2+). The G2 stretch occupies residues 60-64 (GITIN). Positions 81-84 (DCPG) are G3. GTP is bound by residues 81 to 85 (DCPGH) and 136 to 139 (NKVD). Residues 136–139 (NKVD) form a G4 region. The segment at 174 to 176 (SAL) is G5.

This sequence belongs to the TRAFAC class translation factor GTPase superfamily. Classic translation factor GTPase family. EF-Tu/EF-1A subfamily. As to quaternary structure, monomer.

It is found in the cytoplasm. It carries out the reaction GTP + H2O = GDP + phosphate + H(+). In terms of biological role, GTP hydrolase that promotes the GTP-dependent binding of aminoacyl-tRNA to the A-site of ribosomes during protein biosynthesis. This chain is Elongation factor Tu, found in Cytophaga hutchinsonii (strain ATCC 33406 / DSM 1761 / CIP 103989 / NBRC 15051 / NCIMB 9469 / D465).